Reading from the N-terminus, the 319-residue chain is Iron-sulfur cluster transfer protein NUBPL (319 aa).

The N-terminal 38 residues, 1-38 (MGTWRRLLLFGGVSLRGGGAATVPPRGCRALGCGRQLL), are a transit peptide targeting the mitochondrion. Position 75–82 (75–82 (GKGGVGKS)) interacts with ATP.

The protein belongs to the Mrp/NBP35 ATP-binding proteins family. [4Fe-4S] cluster serves as cofactor.

Its subcellular location is the mitochondrion. Its function is as follows. Iron-sulfur cluster transfer protein involved in the assembly of the mitochondrial membrane respiratory chain NADH dehydrogenase (Complex I). May deliver one or more Fe-S clusters to complex I subunits. This chain is Iron-sulfur cluster transfer protein NUBPL (Nubpl), found in Mus musculus (Mouse).